The chain runs to 1280 residues: E3 ubiquitin-protein ligase RKP (1280 aa).

Positions 82–269 constitute a B30.2/SPRY domain; that stretch reads KLHGDLDVSV…CELNFGAYPF (188 aa). A helical transmembrane segment spans residues 551 to 571; sequence SVLVSLFSVILHFLSEGFAML. The tract at residues 669–719 is disordered; sequence DRGKNTAQSSRGRCSSIPERSSHVAAECSAGSFSEEIDDKPSTSNQSDPDF. Residues 834-854 form a helical membrane-spanning segment; it reads ALCMWVVQLLLVLSKMDSVFV. The RING-type zinc finger occupies 1217–1252; sequence CCICYAGEANAMIAPCSHRSCYGCITRHLLNCQRCF.

The protein resides in the membrane. It carries out the reaction S-ubiquitinyl-[E2 ubiquitin-conjugating enzyme]-L-cysteine + [acceptor protein]-L-lysine = [E2 ubiquitin-conjugating enzyme]-L-cysteine + N(6)-ubiquitinyl-[acceptor protein]-L-lysine.. In terms of biological role, E3 ubiquitin-protein ligase that promotes the ubiquitination and proteasomal degradation of KRP1 and KRP2. This is E3 ubiquitin-protein ligase RKP (RKP) from Arabidopsis thaliana (Mouse-ear cress).